A 202-amino-acid chain; its full sequence is Orotate phosphoribosyltransferase (202 aa).

5-phospho-alpha-D-ribose 1-diphosphate-binding positions include Arg-94, Lys-98, His-100, and 120 to 128 (EDLISTGGS). Ser-124 serves as a coordination point for orotate.

The protein belongs to the purine/pyrimidine phosphoribosyltransferase family. PyrE subfamily. In terms of assembly, homodimer. It depends on Mg(2+) as a cofactor.

It catalyses the reaction orotidine 5'-phosphate + diphosphate = orotate + 5-phospho-alpha-D-ribose 1-diphosphate. The protein operates within pyrimidine metabolism; UMP biosynthesis via de novo pathway; UMP from orotate: step 1/2. In terms of biological role, catalyzes the transfer of a ribosyl phosphate group from 5-phosphoribose 1-diphosphate to orotate, leading to the formation of orotidine monophosphate (OMP). This Staphylococcus haemolyticus (strain JCSC1435) protein is Orotate phosphoribosyltransferase.